The sequence spans 39 residues: Contryphan-Cal4 (39 aa).

Residues methionine 1–serine 20 form the signal peptide. A disulfide bridge links cysteine 29 with cysteine 35.

As to expression, expressed by the venom duct.

It is found in the secreted. Probable neurotoxin. This chain is Contryphan-Cal4, found in Californiconus californicus (California cone).